An 83-amino-acid polypeptide reads, in one-letter code: Protein kreg-1 (83 aa).

A disordered region spans residues 62–83 (GHHHHHHGHHFGHHHHHHHGHH).

In terms of tissue distribution, weakly expressed in the intestine, but expression is up-regulated in response to Cu(2+).

Functionally, plays a role in the stress response to heavy metals such as copper, probably in a fos-1/kgb-1-dependent manner. This Caenorhabditis elegans protein is Protein kreg-1.